The primary structure comprises 269 residues: Hydroxyethylthiazole kinase (269 aa).

A substrate-binding site is contributed by Met42. 2 residues coordinate ATP: Arg118 and Ser164. Substrate is bound at residue Gly191.

It belongs to the Thz kinase family. Mg(2+) is required as a cofactor.

It catalyses the reaction 5-(2-hydroxyethyl)-4-methylthiazole + ATP = 4-methyl-5-(2-phosphooxyethyl)-thiazole + ADP + H(+). The protein operates within cofactor biosynthesis; thiamine diphosphate biosynthesis; 4-methyl-5-(2-phosphoethyl)-thiazole from 5-(2-hydroxyethyl)-4-methylthiazole: step 1/1. Catalyzes the phosphorylation of the hydroxyl group of 4-methyl-5-beta-hydroxyethylthiazole (THZ). The polypeptide is Hydroxyethylthiazole kinase (Listeria welshimeri serovar 6b (strain ATCC 35897 / DSM 20650 / CCUG 15529 / CIP 8149 / NCTC 11857 / SLCC 5334 / V8)).